Consider the following 300-residue polypeptide: Spermine synthase SPE4 (300 aa).

At serine 5 the chain carries Phosphoserine. Positions 12–255 constitute a PABS domain; the sequence is DGWFREINDK…GQLGLIVCSN (244 aa). S-adenosyl 3-(methylsulfanyl)propylamine-binding positions include glutamine 44, aspartate 99, glutamate 119, and 151–152; that span reads DG. The Proton acceptor role is filled by aspartate 174. Aspartate 177 serves as a coordination point for spermidine.

It belongs to the spermidine/spermine synthase family.

The enzyme catalyses S-adenosyl 3-(methylsulfanyl)propylamine + spermidine = spermine + S-methyl-5'-thioadenosine + H(+). It functions in the pathway amine and polyamine biosynthesis; spermine biosynthesis; spermine from spermidine: step 1/1. The polypeptide is Spermine synthase SPE4 (SPE4) (Saccharomyces cerevisiae (strain ATCC 204508 / S288c) (Baker's yeast)).